The following is an 83-amino-acid chain: MPKTPANVKPMDVLKSALSRNVLIDVKGNREYSGILEGYDVYMNIVLQNASEIINGENKGVYDRVLVRGDNVIFVSPSKGDGS.

One can recognise a Sm domain in the interval 9 to 81 (KPMDVLKSAL…VIFVSPSKGD (73 aa)).

Belongs to the snRNP Sm proteins family.

The polypeptide is Putative snRNP Sm-like protein (Thermoplasma acidophilum (strain ATCC 25905 / DSM 1728 / JCM 9062 / NBRC 15155 / AMRC-C165)).